Consider the following 393-residue polypeptide: Formate-dependent phosphoribosylglycinamide formyltransferase (393 aa).

Residues 20-21 (EL) and glutamate 80 contribute to the N(1)-(5-phospho-beta-D-ribosyl)glycinamide site. ATP-binding positions include arginine 112, lysine 153, 158-163 (SSGKGQ), 193-196 (EAFI), and glutamate 201. Residues 117–306 (RLAAEDLNLP…EFELHVRAVL (190 aa)) form the ATP-grasp domain. Residues glutamate 265 and glutamate 277 each contribute to the Mg(2+) site. N(1)-(5-phospho-beta-D-ribosyl)glycinamide contacts are provided by residues aspartate 284, lysine 354, and 361 to 362 (RR).

Belongs to the PurK/PurT family. As to quaternary structure, homodimer.

It carries out the reaction N(1)-(5-phospho-beta-D-ribosyl)glycinamide + formate + ATP = N(2)-formyl-N(1)-(5-phospho-beta-D-ribosyl)glycinamide + ADP + phosphate + H(+). Its pathway is purine metabolism; IMP biosynthesis via de novo pathway; N(2)-formyl-N(1)-(5-phospho-D-ribosyl)glycinamide from N(1)-(5-phospho-D-ribosyl)glycinamide (formate route): step 1/1. Functionally, involved in the de novo purine biosynthesis. Catalyzes the transfer of formate to 5-phospho-ribosyl-glycinamide (GAR), producing 5-phospho-ribosyl-N-formylglycinamide (FGAR). Formate is provided by PurU via hydrolysis of 10-formyl-tetrahydrofolate. The polypeptide is Formate-dependent phosphoribosylglycinamide formyltransferase (Syntrophotalea carbinolica (strain DSM 2380 / NBRC 103641 / GraBd1) (Pelobacter carbinolicus)).